The following is a 193-amino-acid chain: Potassium-transporting ATPase KdpC subunit (193 aa).

Residues 14–34 (ITFTFLVLCGLVYPLIVTGIA) traverse the membrane as a helical segment.

Belongs to the KdpC family. In terms of assembly, the system is composed of three essential subunits: KdpA, KdpB and KdpC.

Its subcellular location is the cell membrane. In terms of biological role, part of the high-affinity ATP-driven potassium transport (or Kdp) system, which catalyzes the hydrolysis of ATP coupled with the electrogenic transport of potassium into the cytoplasm. This subunit acts as a catalytic chaperone that increases the ATP-binding affinity of the ATP-hydrolyzing subunit KdpB by the formation of a transient KdpB/KdpC/ATP ternary complex. The polypeptide is Potassium-transporting ATPase KdpC subunit (Bacillus cereus (strain B4264)).